Consider the following 206-residue polypeptide: Large ribosomal subunit protein uL4 (206 aa).

The interval 47 to 75 is disordered; that stretch reads GTQSAKTRAEVSGGGIKPWRQKGTGRARQ.

It belongs to the universal ribosomal protein uL4 family. In terms of assembly, part of the 50S ribosomal subunit.

One of the primary rRNA binding proteins, this protein initially binds near the 5'-end of the 23S rRNA. It is important during the early stages of 50S assembly. It makes multiple contacts with different domains of the 23S rRNA in the assembled 50S subunit and ribosome. Functionally, forms part of the polypeptide exit tunnel. In Clostridium botulinum (strain ATCC 19397 / Type A), this protein is Large ribosomal subunit protein uL4.